The chain runs to 344 residues: Trace amine-associated receptor 8c (344 aa).

Residues 1 to 31 (MTSNFSQPALQLCYENTNGSCIKTPYSPGPR) are Extracellular-facing. Asparagine 4 and asparagine 18 each carry an N-linked (GlcNAc...) asparagine glycan. Disulfide bonds link cysteine 21–cysteine 185 and cysteine 104–cysteine 189. Residues 32-52 (VILYMVYGFGAVLAVCGNLLV) traverse the membrane as a helical segment. The Cytoplasmic segment spans residues 53–67 (VISVLHFKQLHSPAN). The helical transmembrane segment at 68–88 (FLIASLASADFLVGISVMPFS) threads the bilayer. Residues 89–111 (MVRSIESCWYFGDAFCSLHSCCD) lie on the Extracellular side of the membrane. Residues 112-132 (VAFCYSSALHLCFISVDRYIA) traverse the membrane as a helical segment. Residues 133 to 146 (VTDPLVYPTKFTVS) lie on the Cytoplasmic side of the membrane. A helical membrane pass occupies residues 147-167 (VSGICISISWILPLVYSSAVF). At 168 to 195 (YTGISAKGIESLVSALNCVGGCQVVVNQ) the chain is on the extracellular side. The helical transmembrane segment at 196–216 (DWVLISFLLFFIPTVVMIILY) threads the bilayer. The Cytoplasmic portion of the chain corresponds to 217 to 260 (SKIFLVAKQQAVKIETSVSGNRGESSSESHKARVAKRERKAAKT). Residues 261-281 (LGVTVVAFMVSWLPYTIDALV) form a helical membrane-spanning segment. Residue aspartate 282 is a topological domain, extracellular. Residues 283-303 (AFMGFITPAYVYEICCWSAYY) traverse the membrane as a helical segment. Residues 304 to 344 (NSAMNPLIYAFFYPWFRKAIKLILSGKILKGHSSTTNLFSE) lie on the Cytoplasmic side of the membrane.

This sequence belongs to the G-protein coupled receptor 1 family. As to expression, specifically expressed in neurons of the olfactory epithelium.

The protein resides in the cell membrane. In terms of biological role, olfactory receptor specific for trace amines, such ascyclohexylamine (1-MPD). Trace amine compounds are enriched in animal body fluids and act on trace amine-associated receptors (TAARs) to elicit both intraspecific and interspecific innate behaviors. Ligand-binding causes a conformation change that triggers signaling via G(s)-class of G alpha proteins (GNAL or GNAS). The protein is Trace amine-associated receptor 8c of Mus musculus (Mouse).